Consider the following 294-residue polypeptide: tRNA dimethylallyltransferase (294 aa).

ATP is bound at residue 10–17 (GPTAVGKT). A substrate-binding site is contributed by 12-17 (TAVGKT). The segment at 35–38 (DSQQ) is interaction with substrate tRNA.

The protein belongs to the IPP transferase family. Monomer. Requires Mg(2+) as cofactor.

The enzyme catalyses adenosine(37) in tRNA + dimethylallyl diphosphate = N(6)-dimethylallyladenosine(37) in tRNA + diphosphate. Functionally, catalyzes the transfer of a dimethylallyl group onto the adenine at position 37 in tRNAs that read codons beginning with uridine, leading to the formation of N6-(dimethylallyl)adenosine (i(6)A). This chain is tRNA dimethylallyltransferase, found in Streptococcus pneumoniae serotype 4 (strain ATCC BAA-334 / TIGR4).